Consider the following 113-residue polypeptide: uncharacterized protein (113 aa).

It is found in the mitochondrion. This is an uncharacterized protein from Arabidopsis thaliana (Mouse-ear cress).